A 291-amino-acid chain; its full sequence is Peptide methionine sulfoxide reductase MsrB/MsrA (291 aa).

The region spanning 1–124 is the MsrB domain; sequence MLANLQHLSD…NSAALRFVAR (124 aa). Cys-113 (nucleophile) is an active-site residue. Residues 127–284 form a peptide methionine sulfoxide reductase A region; it reads GTALFAAGCF…PGGYCHVSLH (158 aa). Cys-135 is a catalytic residue.

The protein in the N-terminal section; belongs to the MsrB Met sulfoxide reductase family. In the C-terminal section; belongs to the MsrA Met sulfoxide reductase family.

It carries out the reaction L-methionyl-[protein] + [thioredoxin]-disulfide + H2O = L-methionyl-(R)-S-oxide-[protein] + [thioredoxin]-dithiol. It catalyses the reaction L-methionyl-[protein] + [thioredoxin]-disulfide + H2O = L-methionyl-(S)-S-oxide-[protein] + [thioredoxin]-dithiol. The enzyme catalyses [thioredoxin]-disulfide + L-methionine + H2O = L-methionine (S)-S-oxide + [thioredoxin]-dithiol. Its function is as follows. Has an important function as a repair enzyme for proteins that have been inactivated by oxidation. Catalyzes the reversible oxidation-reduction of methionine sulfoxide in proteins to methionine. This chain is Peptide methionine sulfoxide reductase MsrB/MsrA (msrAB), found in Treponema pallidum (strain Nichols).